We begin with the raw amino-acid sequence, 361 residues long: Phospho-N-acetylmuramoyl-pentapeptide-transferase (361 aa).

Helical transmembrane passes span 25 to 45, 73 to 93, 98 to 118, 139 to 159, 168 to 188, 200 to 220, 237 to 257, 264 to 284, 289 to 309, and 339 to 359; these read RGIL…PAVI, TMGG…WGDL, VWLV…DDWI, IFGL…AAIT, IALP…IVGF, GLAI…AYAS, AGEL…FLWF, VFMG…IAVI, MVLV…IIQV, and VIVR…ATLK.

It belongs to the glycosyltransferase 4 family. MraY subfamily. Requires Mg(2+) as cofactor.

The protein localises to the cell inner membrane. The enzyme catalyses UDP-N-acetyl-alpha-D-muramoyl-L-alanyl-gamma-D-glutamyl-meso-2,6-diaminopimeloyl-D-alanyl-D-alanine + di-trans,octa-cis-undecaprenyl phosphate = di-trans,octa-cis-undecaprenyl diphospho-N-acetyl-alpha-D-muramoyl-L-alanyl-D-glutamyl-meso-2,6-diaminopimeloyl-D-alanyl-D-alanine + UMP. It participates in cell wall biogenesis; peptidoglycan biosynthesis. Functionally, catalyzes the initial step of the lipid cycle reactions in the biosynthesis of the cell wall peptidoglycan: transfers peptidoglycan precursor phospho-MurNAc-pentapeptide from UDP-MurNAc-pentapeptide onto the lipid carrier undecaprenyl phosphate, yielding undecaprenyl-pyrophosphoryl-MurNAc-pentapeptide, known as lipid I. This is Phospho-N-acetylmuramoyl-pentapeptide-transferase from Xanthomonas oryzae pv. oryzae (strain PXO99A).